An 844-amino-acid polypeptide reads, in one-letter code: RPA-related protein RADX (844 aa).

A DNA-binding region (OB) is located at residues 228–331; it reads WHNRKNFPAL…LISTMEICLN (104 aa). 2 disordered regions span residues 571-609 and 626-664; these read PASE…RPMD and GPTA…TGKS. Positions 572–587 are enriched in polar residues; that stretch reads ASETLQNASPPSTSQA. Over residues 590-608 the composition is skewed to basic and acidic residues; the sequence is KEGHYHERGSKRSQDDRPM. Residues 652–662 show a composition bias toward polar residues; the sequence is SRENSTANATG.

It is found in the chromosome. Its function is as follows. Single-stranded DNA-binding protein recruited to replication forks to maintain genome stability. Prevents fork collapse by antagonizing the accumulation of RAD51 at forks to ensure the proper balance of fork remodeling and protection without interfering with the capacity of cells to complete homologous recombination of double-strand breaks. The chain is RPA-related protein RADX from Rattus norvegicus (Rat).